The following is a 99-amino-acid chain: Ferredoxin, vegetative (99 aa).

The 2Fe-2S ferredoxin-type domain occupies 4-96; sequence YQVRLINKKR…DCTIRTHQEP (93 aa). Residues C42, C47, C50, and C80 each contribute to the [2Fe-2S] cluster site.

Belongs to the 2Fe2S plant-type ferredoxin family. Requires [2Fe-2S] cluster as cofactor.

Its function is as follows. Ferredoxins are iron-sulfur proteins that transfer electrons in a wide variety of metabolic reactions. Donates electrons to the nitrogenase 2. This chain is Ferredoxin, vegetative (fdxH2), found in Trichormus variabilis (strain ATCC 29413 / PCC 7937) (Anabaena variabilis).